The chain runs to 312 residues: Very-long-chain 3-oxoacyl-CoA reductase-like protein At1g24470 (312 aa).

A helical membrane pass occupies residues 14-34 (LHFVCFIGFLFLLRVLFIPLL). Residue 52-81 (GSWAMVTGATEGIGRAFAHELAKHGLNLIL) participates in NADP(+) binding. A substrate-binding site is contributed by Ser190. Tyr205 (proton acceptor) is an active-site residue.

The protein belongs to the short-chain dehydrogenases/reductases (SDR) family. In terms of tissue distribution, expressed in green siliques, flowers, inflorescence stems and leaves. Not detected in roots.

It localises to the endoplasmic reticulum membrane. Its function is as follows. Probable reductase, but unlike KCR1, has no beta-ketoacyl-coenzyme A reductase activity. The protein is Very-long-chain 3-oxoacyl-CoA reductase-like protein At1g24470 (KCR2) of Arabidopsis thaliana (Mouse-ear cress).